We begin with the raw amino-acid sequence, 540 residues long: RNA exonuclease 3 (540 aa).

A C3H1-type zinc finger spans residues Gln7 to Gln34. Positions His382–Val529 constitute an Exonuclease domain.

The protein belongs to the REXO1/REXO3 family.

Its subcellular location is the cytoplasm. The protein resides in the nucleus. 3' to 5' exoribonuclease required for proper 3' end maturation of MRP RNA and of the U5L snRNA. This is RNA exonuclease 3 (rex3) from Schizosaccharomyces pombe (strain 972 / ATCC 24843) (Fission yeast).